Consider the following 349-residue polypeptide: Protein RecA (349 aa).

65–72 provides a ligand contact to ATP; that stretch reads GPESSGKT.

Belongs to the RecA family.

The protein localises to the cytoplasm. Can catalyze the hydrolysis of ATP in the presence of single-stranded DNA, the ATP-dependent uptake of single-stranded DNA by duplex DNA, and the ATP-dependent hybridization of homologous single-stranded DNAs. It interacts with LexA causing its activation and leading to its autocatalytic cleavage. The chain is Protein RecA from Acinetobacter baumannii (strain AB307-0294).